The chain runs to 1322 residues: Flocculation protein FLO9 (1322 aa).

An N-terminal signal peptide occupies residues 1–24 (MSLAHYCLLLAIVTLLGLTNVVSA). In terms of domain architecture, PA14 spans 74–249 (GGQTDISIDY…GTTVSDDFEG (176 aa)). 6 N-linked (GlcNAc...) asparagine glycosylation sites follow: N135, N187, N203, N257, N262, and N270. Residues 197-240 (NGSPPDNITGTVYMYAGFYYPMKIVYSNAVAWGTLPISVTLPDG) form a sugar recognition region. Tandem repeats lie at residues 278-322 (TTTE…STII), 323-367 (TTTE…TTAI), 368-412 (TTTE…TTAM), 413-457 (TTTQ…TTAM), 458-502 (TTTQ…TTAM), 503-547 (TTTQ…TTAM), 548-592 (TTTQ…TTAI), 593-637 (TTTE…TTAI), 638-682 (TTTQ…TTAM), 683-727 (TTTQ…TTAM), 728-772 (TTTQ…GLIS), 773-817 (TTTE…GLVT), and 818-862 (TTTE…ISSS). The interval 278 to 862 (TTTEPWTGTF…KTPTTAISSS (585 aa)) is 13 X 45 AA approximate tandem repeats, Thr-rich. Residue N329 is glycosylated (N-linked (GlcNAc...) asparagine). N419, N464, N509, N554, N599, N644, N689, and N734 each carry an N-linked (GlcNAc...) asparagine glycan. Disordered regions lie at residues 770 to 799 (LIST…NGQP) and 816 to 843 (VTTT…TNGQ). Composition is skewed to low complexity over residues 773 to 795 (TTTE…VTGT) and 817 to 840 (TTTT…ITGT). N888 is a glycosylation site (N-linked (GlcNAc...) asparagine). A run of 3 repeats spans residues 892–906 (VISS…TSSL), 907–921 (VISS…TSSP), and 922–936 (VISS…ISST). Positions 892–936 (VISSSVISSSDTSSLVISSSVTSSLVTSSPVISSSFISSPVISST) are 3 X 15 AA approximate repeats, Ser-rich. Low complexity predominate over residues 950-1001 (SVIPTSSSTSGSSESETGSASSASSSSSISSESPKSTYSSSSLPPVTSATTS). Positions 950–1018 (SVIPTSSSTS…PPVTTTKTSE (69 aa)) are disordered. Positions 1002–1018 (QEITSSLPPVTTTKTSE) are enriched in polar residues. 3 repeat units span residues 1013–1063 (TTKT…CPIS), 1085–1135 (TTET…CPIS), and 1136–1186 (TTES…RPQT). A 3 X 51 AA approximate repeats, Thr-rich region spans residues 1013 to 1186 (TTKTSEQTTL…TVYSTWRPQT (174 aa)). Positions 1186 to 1196 (TTNEQSVSSKM) are enriched in polar residues. Disordered stretches follow at residues 1186–1221 (TTNE…AAET) and 1256–1284 (SETG…ASSM). Residues 1197–1221 (NSATSETTTNTGAAETTTSTGAAET) are compositionally biased toward low complexity. Residues 1257–1284 (ETGNTKSLTSSGLSTMSQQPRSTPASSM) are compositionally biased toward polar residues. Residue G1299 is the site of GPI-anchor amidated glycine attachment. Residues 1300–1322 (SANSLLAGSGLSVFIASLLLAII) constitute a propeptide, removed in mature form.

The protein belongs to the flocculin family. The GPI-anchor is attached to the protein in the endoplasmic reticulum and serves to target the protein to the cell surface. There, the glucosamine-inositol phospholipid moiety is cleaved off and the GPI-modified mannoprotein is covalently attached via its lipidless GPI glycan remnant to the 1,6-beta-glucan of the outer cell wall layer.

The protein localises to the secreted. Its subcellular location is the cell wall. It is found in the membrane. In terms of biological role, cell wall protein that participates directly in adhesive cell-cell interactions during yeast flocculation, a reversible, asexual and Ca(2+)-dependent process in which cells adhere to form aggregates (flocs) consisting of thousands of cells. The lectin-like protein sticks out of the cell wall of flocculent cells and selectively binds mannose residues in the cell walls of adjacent cells. This chain is Flocculation protein FLO9 (FLO9), found in Saccharomyces cerevisiae (strain ATCC 204508 / S288c) (Baker's yeast).